The primary structure comprises 339 residues: D-erythrose-4-phosphate dehydrogenase (339 aa).

11–12 (RI) is a binding site for NAD(+). Substrate contacts are provided by residues 158-160 (SCT), arginine 204, 217-218 (TK), and arginine 240. Cysteine 159 serves as the catalytic Nucleophile. An NAD(+)-binding site is contributed by asparagine 322.

The protein belongs to the glyceraldehyde-3-phosphate dehydrogenase family. Epd subfamily. In terms of assembly, homotetramer.

The protein resides in the cytoplasm. It catalyses the reaction D-erythrose 4-phosphate + NAD(+) + H2O = 4-phospho-D-erythronate + NADH + 2 H(+). It participates in cofactor biosynthesis; pyridoxine 5'-phosphate biosynthesis; pyridoxine 5'-phosphate from D-erythrose 4-phosphate: step 1/5. Its function is as follows. Catalyzes the NAD-dependent conversion of D-erythrose 4-phosphate to 4-phosphoerythronate. This Aliivibrio salmonicida (strain LFI1238) (Vibrio salmonicida (strain LFI1238)) protein is D-erythrose-4-phosphate dehydrogenase.